A 530-amino-acid polypeptide reads, in one-letter code: NADH-quinone oxidoreductase subunit C/D (530 aa).

The segment at Met-1–Thr-144 is NADH dehydrogenase I subunit C. The NADH dehydrogenase I subunit D stretch occupies residues Glu-171–Arg-530.

This sequence in the N-terminal section; belongs to the complex I 30 kDa subunit family. The protein in the C-terminal section; belongs to the complex I 49 kDa subunit family. NDH-1 is composed of 13 different subunits. Subunits NuoB, CD, E, F, and G constitute the peripheral sector of the complex.

It localises to the cell inner membrane. It catalyses the reaction a quinone + NADH + 5 H(+)(in) = a quinol + NAD(+) + 4 H(+)(out). Its function is as follows. NDH-1 shuttles electrons from NADH, via FMN and iron-sulfur (Fe-S) centers, to quinones in the respiratory chain. The immediate electron acceptor for the enzyme in this species is believed to be a menaquinone. Couples the redox reaction to proton translocation (for every two electrons transferred, four hydrogen ions are translocated across the cytoplasmic membrane), and thus conserves the redox energy in a proton gradient. The chain is NADH-quinone oxidoreductase subunit C/D from Bacteroides thetaiotaomicron (strain ATCC 29148 / DSM 2079 / JCM 5827 / CCUG 10774 / NCTC 10582 / VPI-5482 / E50).